We begin with the raw amino-acid sequence, 135 residues long: Large ribosomal subunit protein eL32 (135 aa).

Residues 51–77 are disordered; that stretch reads GRDNKFRLKMKGKPRPPEPGYRSPRKV.

It belongs to the eukaryotic ribosomal protein eL32 family.

The polypeptide is Large ribosomal subunit protein eL32 (rpl32e) (Nanoarchaeum equitans (strain Kin4-M)).